Consider the following 167-residue polypeptide: Photosystem I assembly protein Ycf3 (167 aa).

3 TPR repeats span residues 35–68 (AFSYYRDGMSAQSEGEYAEALANYYEALNLEEDP), 72–105 (SFILYNIGLIHASNGEYVKALDYYHKALEANNKL), and 120–153 (AVKASEINDLETAQALFHEAAQYWKQAIKLAPSN).

It belongs to the Ycf3 family.

Its subcellular location is the plastid. It localises to the chloroplast thylakoid membrane. Functionally, essential for the assembly of the photosystem I (PSI) complex. May act as a chaperone-like factor to guide the assembly of the PSI subunits. The protein is Photosystem I assembly protein Ycf3 of Galdieria sulphuraria (Red alga).